The primary structure comprises 319 residues: Shiga-like toxin 2 subunit A (319 aa).

The first 22 residues, 1–22 (MKCILFKWVLCLLLGFSSVSYS), serve as a signal peptide directing secretion. Positions 23-272 (REFTIDFSTQ…CHHQGARSVR (250 aa)) are A1. Glu189 is a catalytic residue. A disulfide bridge connects residues Cys263 and Cys282. The tract at residues 273–314 (AVNEESQPECQITGDRPVIKINNTLWESNTAAAFLNRKSQFL) is A2.

Belongs to the ribosome-inactivating protein family. In terms of assembly, shiga-like toxin contains a single A subunit and multiple copies of a B subunit.

The protein localises to the secreted. It catalyses the reaction Endohydrolysis of the N-glycosidic bond at one specific adenosine on the 28S rRNA.. Its function is as follows. The A subunit is responsible for inhibiting protein synthesis through the catalytic inactivation of 60S ribosomal subunits. After endocytosis, the A subunit is cleaved by furin in two fragments, A1 and A2: A1 is the catalytically active fragment, and A2 is essential for holotoxin assembly with the B subunits. This Escherichia coli O157:H7 (Bacteriophage 933W) protein is Shiga-like toxin 2 subunit A (stxA2).